A 261-amino-acid chain; its full sequence is Transmembrane protein 187 (261 aa).

A run of 6 helical transmembrane segments spans residues 8–28 (AFVHVAVAGGLCAVAVFTGIF), 43–63 (APVAGLPAFLAMPFNSLVNMA), 88–108 (VFAAMALLYGPVQWLRLWTQW), 113–133 (VLDQWLTLPIFAWPVAWCLYL), 140–162 (WLFLSLECVSLASYGLALLHPQG), and 190–210 (SATYLALGVLSCLGFVVLKLC).

As to expression, ubiquitous.

It is found in the membrane. This chain is Transmembrane protein 187 (TMEM187), found in Homo sapiens (Human).